We begin with the raw amino-acid sequence, 83 residues long: DNA-directed RNA polymerase subunit Rpo5 (83 aa).

It belongs to the archaeal Rpo5/eukaryotic RPB5 RNA polymerase subunit family. In terms of assembly, part of the RNA polymerase complex.

The protein resides in the cytoplasm. It carries out the reaction RNA(n) + a ribonucleoside 5'-triphosphate = RNA(n+1) + diphosphate. In terms of biological role, DNA-dependent RNA polymerase (RNAP) catalyzes the transcription of DNA into RNA using the four ribonucleoside triphosphates as substrates. The sequence is that of DNA-directed RNA polymerase subunit Rpo5 from Nitrosopumilus maritimus (strain SCM1).